The primary structure comprises 606 residues: MSALTTSQLATSATGFGIADRSAPSSLLRHGFQGLKPRSPAGGDASSLSVTTSARATPKQQRSVQRGSRRFPSVVVYATGAGMNVVFVGAEMAPWSKTGGLGDVLGGLPPAMAANGHRVMVISPRYDQYKDAWDTSVVAEIKVADRYERVRFFHCYKRGVDRVFIDHPSFLEKVWGKTGEKIYGPDTGVDYKDNQMRFSLLCQEAPRILNLNNNPYFKGTYGEDVVFVCNDWHTGPLPSYLKNNYQPNGIYRNAKVAFCIHNISYQGRFAFEDYPELNLSERFKSSFDFIDGYDTPVEGRKINWMKAGILESDRVLTVSPYYAEELISGIARGCELDNIMRLTGITGIVNGMDVSEWDPSKDKYITTKYDATTAIEAKALNKEALQAEAGLPVDRKVPLIAFIGRLEEQKGPDVMAAAIPELMQENVQIVLLGTGKKKFEKLLKSMEEKYPGKVRAVVKFNAPLAHLIMAGADVLAVPSRFEPCGLIQLQGMRYGTPCACASTGGLVDTVIEGKTGFHMGRLSVDCKVVEPSDVQKVATTLKRAIKIVGTPAYNEMVRNCMNQDLSWKGPAKNWENVLLGLGVAGSEPGVEGEEIAPLAKENVAAP.

The transit peptide at 1 to 76 (MSALTTSQLA…GSRRFPSVVV (76 aa)) directs the protein to the chloroplast. The segment at 29 to 67 (RHGFQGLKPRSPAGGDASSLSVTTSARATPKQQRSVQRG) is disordered. The segment covering 46–66 (SSLSVTTSARATPKQQRSVQR) has biased composition (polar residues). Lys97 contacts ADP-alpha-D-glucose.

This sequence belongs to the glycosyltransferase 1 family. Bacterial/plant glycogen synthase subfamily.

Its subcellular location is the plastid. The protein resides in the chloroplast. It localises to the amyloplast. It catalyses the reaction an NDP-alpha-D-glucose + [(1-&gt;4)-alpha-D-glucosyl](n) = [(1-&gt;4)-alpha-D-glucosyl](n+1) + a ribonucleoside 5'-diphosphate + H(+). It participates in glycan biosynthesis; starch biosynthesis. In terms of biological role, required for the synthesis of amylose in endosperm. The chain is Granule-bound starch synthase 1, chloroplastic/amyloplastic (WAXY) from Oryza sativa (Rice).